A 92-amino-acid polypeptide reads, in one-letter code: Non-specific lipid-transfer protein 2 (92 aa).

4 cysteine pairs are disulfide-bonded: C4–C52, C14–C28, C29–C74, and C50–C88.

It belongs to the plant LTP family. As to expression, expressed in seeds and, at very low levels, in pulp of fruit (at protein level).

Plant non-specific lipid-transfer proteins transfer phospholipids as well as galactolipids across membranes. May play a role in wax or cutin deposition in the cell walls of expanding epidermal cells and certain secretory tissues. In Actinidia deliciosa (Kiwi), this protein is Non-specific lipid-transfer protein 2.